A 112-amino-acid chain; its full sequence is MAIKRSSKATSSQAASIKQIVKRCSSLRKMKNVNGCYYNQEDDLPQDVPKGHFPVYVGPNRSRYIVPISWLHHSEFQTLLRLAEEEFGFDHDMGLTIPCDEVFFRSLISMFR.

This sequence belongs to the ARG7 family. In terms of tissue distribution, confined to the veins and petioles of rosette leaves and cauline leaves, and specifically expressed at the abaxial side of inflorescence branche; relocates to both the adaxial (Ad) and abaxial (Ab) sides of the branch in reduced red:far-red (R:FR) light, during shade. Also present in flowers.

Its subcellular location is the cell membrane. In terms of biological role, provide a mechanistic link between auxin and plasma membrane H(+)-ATPases (PM H(+)-ATPases, e.g. AHA1 and AHA2), and triggers PM H(+)-ATPases activity by promoting phosphorylation of their C-terminal autoinhibitory domain as a result of PP2C-D subfamily of type 2C phosphatases inhibition, thus leading to the acidification of the apoplast and the facilitation of solutes and water uptake to drive cell expansion. Triggers plant growth probably by promoting cell elongation. Regulates branch angles and bending. The polypeptide is Protein SMALL AUXIN UP-REGULATED RNA 10 (Arabidopsis thaliana (Mouse-ear cress)).